Reading from the N-terminus, the 133-residue chain is Small ribosomal subunit protein uS8 (133 aa).

Belongs to the universal ribosomal protein uS8 family. In terms of assembly, part of the 30S ribosomal subunit. Contacts proteins S5 and S12.

Functionally, one of the primary rRNA binding proteins, it binds directly to 16S rRNA central domain where it helps coordinate assembly of the platform of the 30S subunit. In Chlamydia trachomatis serovar A (strain ATCC VR-571B / DSM 19440 / HAR-13), this protein is Small ribosomal subunit protein uS8.